The chain runs to 544 residues: Chaperonin GroEL (544 aa).

ATP is bound by residues Thr-29–Pro-32, Asp-86–Thr-90, Gly-413, Asn-476–Leu-478, and Asp-492.

Belongs to the chaperonin (HSP60) family. In terms of assembly, forms a cylinder of 14 subunits composed of two heptameric rings stacked back-to-back. Interacts with the co-chaperonin GroES.

The protein resides in the cytoplasm. It carries out the reaction ATP + H2O + a folded polypeptide = ADP + phosphate + an unfolded polypeptide.. In terms of biological role, together with its co-chaperonin GroES, plays an essential role in assisting protein folding. The GroEL-GroES system forms a nano-cage that allows encapsulation of the non-native substrate proteins and provides a physical environment optimized to promote and accelerate protein folding. The sequence is that of Chaperonin GroEL from Desulfitobacterium hafniense (strain DSM 10664 / DCB-2).